Consider the following 153-residue polypeptide: Pro-corazonin (153 aa).

An N-terminal signal peptide occupies residues 1–20 (MLRLLLLPLFLFTLSMACMG). Gln-21 is subject to Pyrrolidone carboxylic acid. Position 31 is an asparagine amide (Asn-31). Positions 64 to 153 (LERCLLQLQH…AVEPNDYGKH (90 aa)) are excised as a propeptide.

The protein belongs to the corazonin family. Expression is restricted to 24 neurons in the larval CNS (8 in the brain and 16 in the ventral nerve cord) and 12-16 neurons in the pars lateralis of the adult brain.

It localises to the secreted. Functionally, cardioactive peptide. Corazonin is probably involved in the physiological regulation of the heart beat. Clock (Clk) and cycle (cyc) proteins negatively regulate Crz transcription in a cell-specific manner. In Drosophila virilis (Fruit fly), this protein is Pro-corazonin (Crz).